A 182-amino-acid polypeptide reads, in one-letter code: Translation initiation factor IF-3 (182 aa).

Residues 1–22 are disordered; the sequence is MPLGDCNISTPDNKQNRKNQEI.

Belongs to the IF-3 family. Monomer.

The protein localises to the cytoplasm. Functionally, IF-3 binds to the 30S ribosomal subunit and shifts the equilibrium between 70S ribosomes and their 50S and 30S subunits in favor of the free subunits, thus enhancing the availability of 30S subunits on which protein synthesis initiation begins. The chain is Translation initiation factor IF-3 from Xanthomonas axonopodis pv. citri (strain 306).